Reading from the N-terminus, the 423-residue chain is Aspartate aminotransferase, mitochondrial (423 aa).

The N-terminal 22 residues, 1-22, are a transit peptide targeting the mitochondrion; it reads MALLQSRLLLSAPRRAAATARA. Positions 58, 155, and 208 each coordinate substrate. At Lys-272 the chain carries N6-(pyridoxal phosphate)lysine. Residue Arg-400 participates in substrate binding.

The protein belongs to the class-I pyridoxal-phosphate-dependent aminotransferase family. In terms of assembly, homodimer. Requires pyridoxal 5'-phosphate as cofactor. In terms of tissue distribution, detected in heart (at protein level).

The protein localises to the mitochondrion matrix. It carries out the reaction L-aspartate + 2-oxoglutarate = oxaloacetate + L-glutamate. The catalysed reaction is L-kynurenine + 2-oxoglutarate = kynurenate + L-glutamate + H2O. In terms of biological role, catalyzes the irreversible transamination of the L-tryptophan metabolite L-kynurenine to form kynurenic acid (KA). As a member of the malate-aspartate shuttle, it has a key role in the intracellular NAD(H) redox balance. Is important for metabolite exchange between mitochondria and cytosol, and for amino acid metabolism. This is Aspartate aminotransferase, mitochondrial (GOT2) from Gallus gallus (Chicken).